The following is a 546-amino-acid chain: Immunoglobulin heavy constant epsilon (546 aa).

At 1–499 the chain is on the extracellular side; sequence ASTQSPSVFP…EAPWTWTGLC (499 aa). Ig-like domains lie at 6–103, 112–210, 214–318, and 324–423; these read PSVF…KTFS, PTVK…KKCA, PRGV…TKTS, and PEVY…RAVS. Intrachain disulfides connect Cys-15-Cys-105, Cys-29-Cys-85, Cys-135-Cys-193, Cys-239-Cys-299, and Cys-345-Cys-405. Asn-21, Asn-49, Asn-99, Asn-146, Asn-252, Asn-264, and Asn-275 each carry an N-linked (GlcNAc...) asparagine glycan. A helical membrane pass occupies residues 500–520; the sequence is IFAALFLLSVSYSAAITLLMV. The Cytoplasmic portion of the chain corresponds to 521 to 546; that stretch reads QRFLSATRQGRPQTSLDYTNVLQPHA.

As to quaternary structure, the basic structural unit of both sIgE and mIgE molecules consists of two identical heavy chains and two identical light chains; disulfide-linked. N-terminal variable regions of the heavy and light chains form the antigen binding sites, whereas the C-terminal constant regions of the heavy chains interact with immune receptors to mediate effector functions. Part of IgE antibody. Interacts (via CH3) with the alpha chain/FCE1RA of IgE Fc receptor complex. Interacts (via CH3 region) with FCER2 (via C-type lectin domain); this interaction regulates IgE homeostasis. In terms of assembly, part of IgE B cell antigen receptor complex (BCR). The BCR complex consists of one mIgE molecule responsible for antigen binding, non-covalently associated with CD79A and CD79B signaling chains. Expressed in B lymphocytes stimulated with IL4 and CD40.

The protein localises to the secreted. The protein resides in the cell membrane. Functionally, constant region of immunoglobulin heavy chains. Immunoglobulins, also known as antibodies, are membrane-bound or secreted glycoproteins produced by B lymphocytes. In the recognition phase of humoral immunity, the membrane-bound immunoglobulins serve as receptors which, upon binding of a specific antigen, trigger the clonal expansion and differentiation of B lymphocytes into immunoglobulins-secreting plasma cells. Secreted immunoglobulins mediate the effector phase of humoral immunity, which results in the elimination of bound antigens. The antigen binding site is formed by the variable domain of one heavy chain, together with that of its associated light chain. Thus, each immunoglobulin has two antigen binding sites with remarkable affinity for a particular antigen. The variable domains are assembled by a process called V-(D)-J rearrangement and can then be subjected to somatic hypermutations which, after exposure to antigen and selection, allow affinity maturation for a particular antigen. In terms of biological role, constant region of secreted IgE, also known as the Fc region of IgE antibody. Mediates IgE effector functions on myeloid and lymphoid cells primarily via two Fc receptors, the high-affinity IgE Fc receptor complex/FCER1A:MS4A2:FCGR1A and the low-affinity FCER2 receptor, which upon antigen/allergen cross-linking initiate signaling pathways that lead to immune cell activation and differentiation. Triggers the immediate hypersensitivity response to allergens as a host defense mechanism against helminth parasites, pathogenic bacteria and venom toxicity. When dysregulated, it can elicit harmful life-threatening allergic and anaphylactic reactions. Stimulates the high-affinity IgE Fc receptor complex/FCER1A:MS4A2:FCGR1A on mast cells, basophils and eosinophils leading to secretion of vasoactive amines, lipid mediators and cytokines that contribute to inflammatory response, tissue remodeling and cytotoxicity against microbes. On macrophages, cross-linking of FCER2 by IgE immune complexes induces intracellular killing of parasites through activation of L-Arginine-nitric oxide pathway. Activates macrophages to kill tumor cells via antigen-specific antibody-dependent cytotoxicity (ADCC). Triggers differentiation of quiescent M0 macrophages toward M1 state and reprograms M2 macrophages toward a proinflammatory state with antitumor functions. Stimulates FCER2 on B cells and initiates IgE-dependent antigen uptake and presentation to T cells. Its function is as follows. Constant region of membrane-bound IgE (long mIgE), part of the B cell receptor complex (BCR). Upon antigen cross-linking triggers quick BCR signaling, ensuring survival of IgE-switched B cells and differentiation into plasma cells, thus regulating both primary and memory IgE responses. Constant region of membrane-bound IgE (short mIgE), part of the B cell receptor complex (BCR). Upon antigen cross-linking initiates slower but sustained BCR signaling that negatively regulates mature B cell proliferation. This Homo sapiens (Human) protein is Immunoglobulin heavy constant epsilon.